An 83-amino-acid chain; its full sequence is Putative beta-neurotoxin RjAa15f (83 aa).

Residues 1 to 18 (MKILIFIIASFMLIGVEC) form the signal peptide. In terms of domain architecture, LCN-type CS-alpha/beta spans 19–82 (KEGYPMGRNG…VWDSSNNKCV (64 aa)). Cystine bridges form between C29-C81, C33-C55, C40-C62, and C44-C64.

The protein belongs to the long (4 C-C) scorpion toxin superfamily. Sodium channel inhibitor family. Beta subfamily. In terms of tissue distribution, expressed by the venom gland.

It localises to the secreted. Its function is as follows. Beta toxins bind voltage-independently at site-4 of sodium channels (Nav) and shift the voltage of activation toward more negative potentials thereby affecting sodium channel activation and promoting spontaneous and repetitive firing. The polypeptide is Putative beta-neurotoxin RjAa15f (Rhopalurus junceus (Caribbean blue scorpion)).